The following is a 189-amino-acid chain: Elongation factor P (189 aa).

K34 carries the post-translational modification N6-(3,6-diaminohexanoyl)-5-hydroxylysine.

Belongs to the elongation factor P family. May be beta-lysylated on the epsilon-amino group of Lys-34 by the combined action of EpmA and EpmB, and then hydroxylated on the C5 position of the same residue by EpmC (if this protein is present). Lysylation is critical for the stimulatory effect of EF-P on peptide-bond formation. The lysylation moiety may extend toward the peptidyltransferase center and stabilize the terminal 3-CCA end of the tRNA. Hydroxylation of the C5 position on Lys-34 may allow additional potential stabilizing hydrogen-bond interactions with the P-tRNA.

The protein localises to the cytoplasm. It functions in the pathway protein biosynthesis; polypeptide chain elongation. Functionally, involved in peptide bond synthesis. Alleviates ribosome stalling that occurs when 3 or more consecutive Pro residues or the sequence PPG is present in a protein, possibly by augmenting the peptidyl transferase activity of the ribosome. Modification of Lys-34 is required for alleviation. This is Elongation factor P from Nitrosococcus oceani (strain ATCC 19707 / BCRC 17464 / JCM 30415 / NCIMB 11848 / C-107).